Reading from the N-terminus, the 452-residue chain is Mitochondrial import inner membrane translocase subunit TIM50 (452 aa).

The transit peptide at 1-23 (MSLSKLTQTCFSRHQAKTFIRLY) directs the protein to the mitochondrion. Topologically, residues 24-167 (SSDFKSLLGP…RRKRMERNTR (144 aa)) are mitochondrial matrix. Disordered stretches follow at residues 96 to 115 (IEAEKVLSSPPPAPAPTSSA) and 130 to 153 (ESAASKSSSSSGGSSDNSDPGNAE). Positions 131–144 (SAASKSSSSSGGSS) are enriched in low complexity. A helical membrane pass occupies residues 168–188 (IGAYVLFGGSIIGFISFCFYY). Residues 189-452 (GRAQRDEFGN…LFGSRRHVNA (264 aa)) lie on the Mitochondrial intermembrane side of the membrane. Residues 243-387 (YLQPKYTIVI…VDLAELLKTI (145 aa)) enclose the FCP1 homology domain.

This sequence belongs to the TIM50 family.

It localises to the mitochondrion inner membrane. Essential component of the TIM23 complex, a complex that mediates the translocation of transit peptide-containing proteins across the mitochondrial inner membrane. In Caenorhabditis elegans, this protein is Mitochondrial import inner membrane translocase subunit TIM50 (scpl-4).